We begin with the raw amino-acid sequence, 100 residues long: UPF0473 protein LMHCC_1068 (100 aa).

It belongs to the UPF0473 family.

This Listeria monocytogenes serotype 4a (strain HCC23) protein is UPF0473 protein LMHCC_1068.